The following is a 372-amino-acid chain: uncharacterized protein (372 aa).

The disordered stretch occupies residues 49–72 (FSHKGGGKGGGSGAGSNDGGCSGE). Residues 55 to 70 (GKGGGSGAGSNDGGCS) show a composition bias toward gly residues.

This is an uncharacterized protein from Halorubrum lacusprofundi (strain ATCC 49239 / DSM 5036 / JCM 8891 / ACAM 34).